The primary structure comprises 171 residues: S-ribosylhomocysteine lyase (171 aa).

Histidine 54, histidine 58, and cysteine 128 together coordinate Fe cation.

The protein belongs to the LuxS family. As to quaternary structure, homodimer. The cofactor is Fe cation.

The enzyme catalyses S-(5-deoxy-D-ribos-5-yl)-L-homocysteine = (S)-4,5-dihydroxypentane-2,3-dione + L-homocysteine. Involved in the synthesis of autoinducer 2 (AI-2) which is secreted by bacteria and is used to communicate both the cell density and the metabolic potential of the environment. The regulation of gene expression in response to changes in cell density is called quorum sensing. Catalyzes the transformation of S-ribosylhomocysteine (RHC) to homocysteine (HC) and 4,5-dihydroxy-2,3-pentadione (DPD). The sequence is that of S-ribosylhomocysteine lyase from Escherichia coli O81 (strain ED1a).